The primary structure comprises 352 residues: DNA polymerase IV (352 aa).

Residues 4-185 (IIHVDMDCFF…LPLSKIPGVG (182 aa)) enclose the UmuC domain. Residues Asp8 and Asp103 each coordinate Mg(2+). Residue Glu104 is part of the active site.

The protein belongs to the DNA polymerase type-Y family. In terms of assembly, monomer. The cofactor is Mg(2+).

The protein resides in the cytoplasm. It carries out the reaction DNA(n) + a 2'-deoxyribonucleoside 5'-triphosphate = DNA(n+1) + diphosphate. Its function is as follows. Poorly processive, error-prone DNA polymerase involved in untargeted mutagenesis. Copies undamaged DNA at stalled replication forks, which arise in vivo from mismatched or misaligned primer ends. These misaligned primers can be extended by PolIV. Exhibits no 3'-5' exonuclease (proofreading) activity. May be involved in translesional synthesis, in conjunction with the beta clamp from PolIII. The polypeptide is DNA polymerase IV (Yersinia pestis bv. Antiqua (strain Antiqua)).